The chain runs to 295 residues: Secreted frizzled-related protein 2 (295 aa).

An N-terminal signal peptide occupies residues 1–24 (MLQGPGSLLLLFLASHCCLGSARG). In terms of domain architecture, FZ spans 35–155 (YKRSNCKPIP…PQDNDLCIPL (121 aa)). Cystine bridges form between Cys40/Cys103, Cys50/Cys96, Cys87/Cys125, Cys114/Cys152, Cys118/Cys142, Cys172/Cys245, Cys175/Cys247, and Cys190/Cys295. The 124-residue stretch at 172–295 (CEACKNKNDD…ISRSIRKLQC (124 aa)) folds into the NTR domain.

The protein belongs to the secreted frizzled-related protein (sFRP) family. Expressed in adipose tissue, heart, brain, skeletal muscle, pancreas, thymus, prostate, testis, ovary, small intestine and colon. Highest levels in adipose tissue, small intestine and colon.

The protein resides in the secreted. Functionally, soluble frizzled-related proteins (sFRPS) function as modulators of Wnt signaling through direct interaction with Wnts. They have a role in regulating cell growth and differentiation in specific cell types. SFRP2 may be important for eye retinal development and for myogenesis. The sequence is that of Secreted frizzled-related protein 2 (SFRP2) from Homo sapiens (Human).